The chain runs to 825 residues: Hypoxia-inducible factor 1-alpha (825 aa).

A disordered region spans residues 1 to 30; it reads MEGAGGENEKKKMSSERRKEKSRDAARSRR. The interaction with TSGA10 stretch occupies residues 1–401; sequence MEGAGGENEK…KEPDALTLLA (401 aa). Residues 7-30 are compositionally biased toward basic and acidic residues; that stretch reads ENEKKKMSSERRKEKSRDAARSRR. A bHLH domain is found at 17-70; it reads RRKEKSRDAARSRRSKESEVFYELAHQLPLPHNVSSHLDKASVMRLTISYLRVR. The segment at 21 to 30 is DNA-binding; that stretch reads KSRDAARSRR. The PAS 1 domain occupies 85–158; the sequence is KAQMNCFYLK…THRNGPVRKG (74 aa). The required for heterodimer formation with ARNT stretch occupies residues 170–191; sequence RMKCTLTSRGRTMNIKSATWKV. The PAS 2 domain occupies 228 to 298; sequence PHPSNIEIPL…KTHHDMFTKG (71 aa). At serine 247 the chain carries Phosphoserine; by CK1. Residues 302–345 enclose the PAC domain; sequence TGQYRMLAKRGGYVWVETQATVIYNTKDSQPQCIVCVNYVVSGI. Positions 401–602 are ODD; the sequence is APAAGDTIIS…STVTGFQQTQ (202 aa). 4-hydroxyproline is present on proline 402. The span at 492 to 516 shows a compositional bias: polar residues; sequence QIQDQPASPSDGSTRQSSPEPNSPS. The tract at residues 492–520 is disordered; it reads QIQDQPASPSDGSTRQSSPEPNSPSEYCF. Residues 530-574 are NTAD; it reads FKLELVEKLFAEDTEAKNPFSAQDTDLDLEMLAPYIPMDDDFQLR. N6-acetyllysine; alternate is present on lysine 531. A Glycyl lysine isopeptide (Lys-Gly) (interchain with G-Cter in ubiquitin); alternate cross-link involves residue lysine 531. Residues lysine 537 and lysine 546 each participate in a glycyl lysine isopeptide (Lys-Gly) (interchain with G-Cter in ubiquitin) cross-link. Residue serine 550 is modified to Phosphoserine; by GSK3-beta. Phosphothreonine; by GSK3-beta is present on threonine 554. Proline 563 carries the post-translational modification 4-hydroxyproline. Serine 575 is subject to Phosphoserine; by PLK3. The interval 575 to 784 is ID; sequence SFDQLSPLES…SDLACRLLGQ (210 aa). 2 disordered regions span residues 579 to 602 and 654 to 674; these read LSPL…QQTQ and AKAS…RAGK. Serine 588 carries the phosphoserine; by GSK3-beta modification. Over residues 654–667 the composition is skewed to polar residues; the sequence is AKASAYSGTHSRTA. Position 657 is a phosphoserine; by PLK3 (serine 657). The Nuclear localization signal motif lies at 717 to 721; it reads RKRKM. Residues 785 to 825 are CTAD; sequence SMDESGLPQLTSYDCEVNAPIQGSRNLLQGEELLRALDQVN. Cysteine 799 carries the post-translational modification S-nitrosocysteine. The residue at position 802 (asparagine 802) is a (3S)-3-hydroxyasparagine.

Interacts with the ARNT; forms a heterodimer that binds core DNA sequence 5'-TACGTG-3' within the hypoxia response element (HRE) of target gene promoters. Interacts with COPS5; the interaction increases the transcriptional activity of HIF1A through increased stability. Interacts with EP300 (via TAZ-type 1 domains); the interaction is stimulated in response to hypoxia and inhibited by CITED2. Interacts with CREBBP (via TAZ-type 1 domains). Interacts with NCOA1, NCOA2, APEX1 and HSP90. Interacts (hydroxylated within the ODD domain) with VHLL (via beta domain); the interaction, leads to polyubiquitination and subsequent HIF1A proteasomal degradation. During hypoxia, sumoylated HIF1A also binds VHL; the interaction promotes the ubiquitination of HIF1A. Interacts with SENP1; the interaction desumoylates HIF1A resulting in stabilization and activation of transcription. Interacts (via the ODD domain) with NAA10; the interaction appears not to acetylate HIF1A nor have any affect on protein stability, during hypoxia. Interacts with RWDD3; the interaction enhances HIF1A sumoylation. Interacts with TSGA10. Interacts with HIF3A. Interacts with RORA (via the DNA binding domain); the interaction enhances HIF1A transcription under hypoxia through increasing protein stability. Interaction with PSMA7 inhibits the transactivation activity of HIF1A under both normoxic and hypoxia-mimicking conditions. Interacts with USP20. Interacts with RACK1; promotes HIF1A ubiquitination and proteasome-mediated degradation. Interacts (via N-terminus) with USP19. Interacts with SIRT2. Interacts (deacetylated form) with EGLN1. Interacts with CBFA2T3. Interacts with HSP90AA1 and HSP90AB1. Interacts with DCUN1D1; this interaction increases the interaction between VHL and DCUN1D1. Interacts with HIF1AN. Post-translationally, S-nitrosylation of Cys-799 may be responsible for increased recruitment of p300 coactivator necessary for transcriptional activity of HIF-1 complex. In terms of processing, acetylation of Lys-531 by ARD1 increases interaction with VHL and stimulates subsequent proteasomal degradation. Deacetylated by SIRT2 increases its interaction with and hydroxylation by EGLN1 thereby inactivating HIF1A activity by inducing its proteasomal degradation. Ubiquitinated; in normoxia, following hydroxylation and interaction with VHL. Lys-531 appears to be the principal site of ubiquitination. Clioquinol, the Cu/Zn-chelator, inhibits ubiquitination through preventing hydroxylation at Asn-802. Ubiquitinated by E3 ligase VHL. Deubiquitinated by UCHL1. Post-translationally, requires phosphorylation for DNA-binding. Phosphorylation at Ser-247 by CSNK1D/CK1 represses kinase activity and impairs ARNT binding. Phosphorylation by GSK3-beta and PLK3 promote degradation by the proteasome. In terms of processing, the iron and 2-oxoglutarate dependent 3-hydroxylation of asparagine is (S) stereospecific within HIF CTAD domains. Sumoylated; with SUMO1 under hypoxia. Sumoylation is enhanced through interaction with RWDD3. Both sumoylation and desumoylation seem to be involved in the regulation of its stability during hypoxia. Sumoylation can promote either its stabilization or its VHL-dependent degradation by promoting hydroxyproline-independent HIF1A-VHL complex binding, thus leading to HIF1A ubiquitination and proteasomal degradation. Desumoylation by SENP1 increases its stability amd transcriptional activity. There is a disaccord between various publications on the effect of sumoylation and desumoylation on its stability and transcriptional activity. Post-translationally, in normoxia, is hydroxylated on Pro-402 and Pro-563 in the oxygen-dependent degradation domain (ODD) by EGLN1/PHD2 and EGLN2/PHD1. EGLN3/PHD3 has also been shown to hydroxylate Pro-563. The hydroxylated prolines promote interaction with VHL, initiating rapid ubiquitination and subsequent proteasomal degradation. Deubiquitinated by USP20. Under hypoxia, proline hydroxylation is impaired and ubiquitination is attenuated, resulting in stabilization. In normoxia, is hydroxylated on Asn-802 by HIF1AN, thus abrogating interaction with CREBBP and EP300 and preventing transcriptional activation. Repressed by iron ion, via Fe(2+) prolyl hydroxylase (PHD) enzymes-mediated hydroxylation and subsequent proteasomal degradation. Expressed in the kidney, higher expression is seen in the renal medulla than in the cortex. Expressed also in the perivenous zone of the liver.

It localises to the cytoplasm. The protein localises to the nucleus. The protein resides in the nucleus speckle. With respect to regulation, induced by reactive oxygen species (ROS). Its function is as follows. Functions as a master transcriptional regulator of the adaptive response to hypoxia. Under hypoxic conditions, activates the transcription of over 40 genes, including erythropoietin, glucose transporters, glycolytic enzymes, vascular endothelial growth factor, HILPDA, and other genes whose protein products increase oxygen delivery or facilitate metabolic adaptation to hypoxia. Plays an essential role in embryonic vascularization, tumor angiogenesis and pathophysiology of ischemic disease. Heterodimerizes with ARNT; heterodimer binds to core DNA sequence 5'-TACGTG-3' within the hypoxia response element (HRE) of target gene promoters. Activation requires recruitment of transcriptional coactivators such as CREBBP and EP300. Activity is enhanced by interaction with NCOA1 and/or NCOA2. Interaction with redox regulatory protein APEX1 seems to activate CTAD and potentiates activation by NCOA1 and CREBBP. Involved in the axonal distribution and transport of mitochondria in neurons during hypoxia. This is Hypoxia-inducible factor 1-alpha (Hif1a) from Rattus norvegicus (Rat).